A 316-amino-acid chain; its full sequence is ATP synthase gamma chain (316 aa).

The protein belongs to the ATPase gamma chain family. F-type ATPases have 2 components, CF(1) - the catalytic core - and CF(0) - the membrane proton channel. CF(1) has five subunits: alpha(3), beta(3), gamma(1), delta(1), epsilon(1). CF(0) has three main subunits: a, b and c.

It localises to the cellular thylakoid membrane. Produces ATP from ADP in the presence of a proton gradient across the membrane. The gamma chain is believed to be important in regulating ATPase activity and the flow of protons through the CF(0) complex. This is ATP synthase gamma chain from Synechococcus sp. (strain ATCC 27144 / PCC 6301 / SAUG 1402/1) (Anacystis nidulans).